A 260-amino-acid chain; its full sequence is Ribosomal RNA small subunit methyltransferase A (260 aa).

Positions 23, 48, 69, 94, and 110 each coordinate S-adenosyl-L-methionine.

The protein belongs to the class I-like SAM-binding methyltransferase superfamily. rRNA adenine N(6)-methyltransferase family. RsmA subfamily.

The protein localises to the cytoplasm. It carries out the reaction adenosine(1518)/adenosine(1519) in 16S rRNA + 4 S-adenosyl-L-methionine = N(6)-dimethyladenosine(1518)/N(6)-dimethyladenosine(1519) in 16S rRNA + 4 S-adenosyl-L-homocysteine + 4 H(+). Its function is as follows. Specifically dimethylates two adjacent adenosines (A1518 and A1519) in the loop of a conserved hairpin near the 3'-end of 16S rRNA in the 30S particle. May play a critical role in biogenesis of 30S subunits. The polypeptide is Ribosomal RNA small subunit methyltransferase A (Thermotoga neapolitana (strain ATCC 49049 / DSM 4359 / NBRC 107923 / NS-E)).